The primary structure comprises 307 residues: Recombination-associated protein RdgC (307 aa).

The protein belongs to the RdgC family.

The protein localises to the cytoplasm. The protein resides in the nucleoid. Its function is as follows. May be involved in recombination. This chain is Recombination-associated protein RdgC, found in Burkholderia cenocepacia (strain ATCC BAA-245 / DSM 16553 / LMG 16656 / NCTC 13227 / J2315 / CF5610) (Burkholderia cepacia (strain J2315)).